An 88-amino-acid chain; its full sequence is uncharacterized protein (88 aa).

The chain crosses the membrane as a helical span at residues 34–54 (IIIAVILIFFLTIVGLFYLII).

The protein localises to the membrane. This is an uncharacterized protein from Ureaplasma parvum serovar 3 (strain ATCC 700970).